The sequence spans 225 residues: PKHD-type hydroxylase YbiX (225 aa).

One can recognise a Fe2OG dioxygenase domain in the interval 78-177 (TLSTPLFNRY…RVASFMWIQS (100 aa)). Fe cation is bound by residues His96, Asp98, and His158. Arg168 is a binding site for 2-oxoglutarate.

Fe(2+) is required as a cofactor. The cofactor is L-ascorbate.

The protein is PKHD-type hydroxylase YbiX of Escherichia coli O17:K52:H18 (strain UMN026 / ExPEC).